The primary structure comprises 239 residues: MEVDSKKSSDVVTKLPQKRFYRQRAHSNPIADHSFQYPAHPDEYEWSQHYPDIGDRRVAFADIGCGYGGFLVTLGEIYPDKFAVGMEIRVKVSDYVMDRIDALRKLHEGQYRNVACIRTNAMKYLTNFFHKAQLEKMFFLYPDPHFKKAKHKWRIINSALLSEYSYVLRKGGLIYTVTDVRDLHEWMCKHIEQHPAFERLSEAEVEADILSEKLLDSSEEGKKVTRNKGDKFVAIFRRV.

S-adenosyl-L-methionine-binding positions include glycine 64, 87 to 88 (EI), 120 to 121 (NA), and leucine 140. The active site involves aspartate 143. An S-adenosyl-L-methionine-binding site is contributed by 218-220 (SEE).

Belongs to the class I-like SAM-binding methyltransferase superfamily. TrmB family.

It is found in the nucleus. It carries out the reaction guanosine(46) in tRNA + S-adenosyl-L-methionine = N(7)-methylguanosine(46) in tRNA + S-adenosyl-L-homocysteine. The protein operates within tRNA modification; N(7)-methylguanine-tRNA biosynthesis. In terms of biological role, catalyzes the formation of N(7)-methylguanine at position 46 (m7G46) in tRNA. This is tRNA (guanine-N(7)-)-methyltransferase from Culex quinquefasciatus (Southern house mosquito).